The following is a 145-amino-acid chain: MKIKIQKIHPNALIPKYQTEGSSGFDLHAVEEVVIKPHSVGLVRIGICLSLEVGYELQVRTRSGLALNHQVMVLNSPGTVDNDYRGEIKVILANLSDKDFKVQVGDRIAQGVVQKTYKAEFIECEQLDETSRGSGGFGSTGVSKA.

Residues 62-64 (RSG), Asn-75, 79-81 (TVD), and Lys-89 each bind substrate.

The protein belongs to the dUTPase family. Mg(2+) serves as cofactor.

The enzyme catalyses dUTP + H2O = dUMP + diphosphate + H(+). It functions in the pathway pyrimidine metabolism; dUMP biosynthesis; dUMP from dCTP (dUTP route): step 2/2. In terms of biological role, this enzyme is involved in nucleotide metabolism: it produces dUMP, the immediate precursor of thymidine nucleotides and it decreases the intracellular concentration of dUTP so that uracil cannot be incorporated into DNA. This Helicobacter pylori (strain J99 / ATCC 700824) (Campylobacter pylori J99) protein is Deoxyuridine 5'-triphosphate nucleotidohydrolase.